Consider the following 654-residue polypeptide: Neuroendocrine convertase 2 (654 aa).

Positions 1–21 (MAAATWSWLLAPFLLLHWASA) are cleaved as a signal peptide. Positions 22-121 (GAGGGAGGSG…VQQPGFKRVK (100 aa)) are excised as a propeptide. Residues 158-483 (QWYLKNTGQN…FGVLDAGAMV (326 aa)) form the Peptidase S8 domain. An N-linked (GlcNAc...) asparagine glycan is attached at Asn-189. Catalysis depends on charge relay system residues Asp-196 and His-237. 2 disulfide bridges follow: Cys-254–Cys-404 and Cys-346–Cys-376. Asn-312 is a glycosylation site (N-linked (GlcNAc...) asparagine). The active-site Charge relay system is the Ser-412. The P/Homo B domain maps to 491–627 (SVPPRYHCEA…SLVLHGTKEA (137 aa)). The cysteines at positions 498 and 524 are disulfide-linked. Asn-544 carries N-linked (GlcNAc...) asparagine glycosylation.

It belongs to the peptidase S8 family. Furin subfamily. As to expression, expressed in the central nervous system (CNS) and midgut endocrine cells of third instar larva (at protein level). In the CNS, expressed in the CA-LP1 and CA-LP2 neurons which innervate the corpus allatum, and in the CC-MS2 neurons which innervate the corpora cardiaca of the ring gland. Also expressed in the CC-MS1, SP3, Tv and Va neurons. Expressed in Akh-producing cells of the corpora cardiaca. In the embryo, restricted to the final stages of embryogenesis where expression is found in anterior sensory structures and in only 168 cells in the brain and ventral nerve cord. After larvae hatch, the sensory structures and most cells in the CNS turn off or substantially reduce expression. In third instar larva, expressed at higher levels in the anterior section than in the posterior section. Little expression is detected in the adult head. In the developing eye, expressed at higher levels in pale-type R7 photoreceptor cells than in yellow-type R7 cells although expression is not seen in all pale-type R7 cells. Also expressed in outer photoreceptor cells.

The protein localises to the secreted. It carries out the reaction Release of protein hormones and neuropeptides from their precursors, generally by hydrolysis of -Lys-Arg-|- bonds.. In terms of biological role, serine endopeptidase which is involved in the processing of hormone and other protein precursors at sites comprised of pairs of basic amino acid residues. Required during embryonic and larval development, probably by proteolytically processing peptide hormones involved in hatching, larval growth and larval molting. Required for the processing and activation of Akh which maintains normal hemolymph sugar levels. Has been shown in one study to be required for processing of sli into slit N-product and slit C-product in the embryo which is necessary for lateral transverse muscle elongation but has been shown in another study not to be required for sli cleavage. Required for larval hatching. Also required for normal larval wandering behavior which occurs prior to pupariation. Required during pupal development for head eversion, leg and wing disk extension, and abdominal differentiation. Required during eye development for R8 photoreceptor cell specification by regulating processing of ligands required for the BMP and activin signaling pathways. The polypeptide is Neuroendocrine convertase 2 (Drosophila melanogaster (Fruit fly)).